A 280-amino-acid chain; its full sequence is Nucleotide-binding protein Mfla_0145 (280 aa).

Residue 8–15 coordinates ATP; that stretch reads GLSGSGKS. 57-60 contributes to the GTP binding site; that stretch reads DTRS.

Belongs to the RapZ-like family.

Displays ATPase and GTPase activities. In Methylobacillus flagellatus (strain ATCC 51484 / DSM 6875 / VKM B-1610 / KT), this protein is Nucleotide-binding protein Mfla_0145.